We begin with the raw amino-acid sequence, 664 residues long: Cyclic nucleotide-gated channel alpha-2 (664 aa).

The segment covering 1-11 (MTEKTNGVKSS) has biased composition (polar residues). The interval 1 to 49 (MTEKTNGVKSSPANNHNHHAPPAIKANGKDDHRTSSRPHSAADDDTSSE) is disordered. Over 1 to 144 (MTEKTNGVKS…PAGDWYYCWL (144 aa)) the chain is Cytoplasmic. Over residues 12–23 (PANNHNHHAPPA) the composition is skewed to low complexity. A helical transmembrane segment spans residues 145-166 (FVIAMPVLYNWCLLVARACFSD). The Extracellular segment spans residues 167 to 176 (LQKGYYLVWL). A helical transmembrane segment spans residues 177–197 (VLDYVSDVVYIADLFIRLRTG). The Cytoplasmic portion of the chain corresponds to 198 to 222 (FLEQGLLVKDTKKLRDNYIHTLQFK). A helical membrane pass occupies residues 223-241 (LDVASIIPTDLIYFAVDIH). At 242–246 (SPEVR) the chain is on the extracellular side. A helical membrane pass occupies residues 247–265 (FNRLLHFARMFEFFDRTET). Topologically, residues 266-272 (RTNYPNI) are cytoplasmic. An ion conduction pathway region spans residues 270-378 (PNIFRISNLV…GNVGSMISNM (109 aa)). A helical transmembrane segment spans residues 273-296 (FRISNLVLYILVIIHWNACIYYAI). The Extracellular portion of the chain corresponds to 297–319 (SKSIGFGVDTWVYPNITDPEYGY). The next 2 membrane-spanning stretches (helical) occupy residues 320-354 (LARE…LFVI) and 355-379 (FDFL…SNMN). A selectivity filter region spans residues 337 to 340 (TIGE). Positions 380 to 456 (ATRAEFQAKI…STLKKVRIFH (77 aa)) are C-linker. The Cytoplasmic portion of the chain corresponds to 380-664 (ATRAEFQAKI…SPELAAADEP (285 aa)). A cyclic nucleotide-binding domain region spans residues 460 to 580 (AGLLVELVLK…EERGREILMK (121 aa)). 3',5'-cyclic GMP contacts are provided by Gly520, Ser523, Arg536, and Thr537. The 3',5'-cyclic AMP site is built by Arg536 and Thr537. Residues 597 to 651 (VQEKLGQLETNMETLYTRFGRLLAEYTGAQQKLKQRITVLETKMKQNNEDDYLSD) are a coiled coil. The disordered stretch occupies residues 641–664 (KQNNEDDYLSDGMNSPELAAADEP).

It belongs to the cyclic nucleotide-gated cation channel (TC 1.A.1.5) family. CNGA2 subfamily. The olfactory cyclic nucleotide-gated channel is an heterotetramer composed of CNGA2, CNGA4 and CNGB1b subunits with 2:1:1 stoichiometry.

It localises to the cell projection. It is found in the cilium membrane. It catalyses the reaction Ca(2+)(in) = Ca(2+)(out). The enzyme catalyses Na(+)(in) = Na(+)(out). It carries out the reaction K(+)(in) = K(+)(out). The catalysed reaction is NH4(+)(in) = NH4(+)(out). It catalyses the reaction Rb(+)(in) = Rb(+)(out). The enzyme catalyses Li(+)(in) = Li(+)(out). It carries out the reaction Cs(+)(in) = Cs(+)(out). Functionally, pore-forming subunit of the olfactory cyclic nucleotide-gated channel. Operates in the cilia of olfactory sensory neurons where chemical stimulation of the odorant is converted to an electrical signal. Mediates odorant-induced cAMP-dependent Ca(2+) influx triggering neuron depolarization. The rise of intracellular Ca(2+) levels potentiates the olfactory response by activating Ca(2+)-dependent Cl(-) channels, but it also serves as a negative feedback signal to desensitize the channel for rapid adaptation to odorants. Conducts cAMP- and cGMP-gated ion currents, with permeability for monovalent and divalent cations. This is Cyclic nucleotide-gated channel alpha-2 from Homo sapiens (Human).